Here is an 89-residue protein sequence, read N- to C-terminus: Small ribosomal subunit protein uS15 (89 aa).

Over residues 1 to 13 the composition is skewed to basic and acidic residues; the sequence is MTISKERKEEVIS. The interval 1–24 is disordered; sequence MTISKERKEEVISEHGAAAGDTGS.

This sequence belongs to the universal ribosomal protein uS15 family. As to quaternary structure, part of the 30S ribosomal subunit. Forms a bridge to the 50S subunit in the 70S ribosome, contacting the 23S rRNA.

One of the primary rRNA binding proteins, it binds directly to 16S rRNA where it helps nucleate assembly of the platform of the 30S subunit by binding and bridging several RNA helices of the 16S rRNA. Its function is as follows. Forms an intersubunit bridge (bridge B4) with the 23S rRNA of the 50S subunit in the ribosome. The chain is Small ribosomal subunit protein uS15 from Rhodopirellula baltica (strain DSM 10527 / NCIMB 13988 / SH1).